The following is a 205-amino-acid chain: Cytochrome c oxidase subunit 3 (205 aa).

5 helical membrane passes run 28-48, 72-92, 104-124, 142-162, and 184-204; these read GTIV…AMYF, ALVI…GVFA, WFSL…YEYF, FFIT…AFVV, and SYYW…IYFI.

It belongs to the cytochrome c oxidase subunit 3 family. As to quaternary structure, associates with subunits I, II and IV to form cytochrome c oxidase.

Its subcellular location is the cell membrane. The catalysed reaction is 4 Fe(II)-[cytochrome c] + O2 + 8 H(+)(in) = 4 Fe(III)-[cytochrome c] + 2 H2O + 4 H(+)(out). In Corynebacterium diphtheriae (strain ATCC 700971 / NCTC 13129 / Biotype gravis), this protein is Cytochrome c oxidase subunit 3 (ctaE).